The chain runs to 551 residues: Solute carrier family 22 member 4 (551 aa).

At 1–20 (MRDYDEAIAFLGEWGPFQRL) the chain is on the cytoplasmic side. The helical transmembrane segment at 21-41 (IFFLLSASIIPNGFNGMSVVF) threads the bilayer. At 42 to 141 (LAGTPEHRCR…WNLVCEDNWK (100 aa)) the chain is on the extracellular side. N-linked (GlcNAc...) asparagine glycans are attached at residues Asn-57, Asn-64, and Asn-91. The helical transmembrane segment at 142 to 162 (VPLTTSLFFVGVLLGSFVSGQ) threads the bilayer. At 163–171 (LSDRFGRKN) the chain is on the cytoplasmic side. The chain crosses the membrane as a helical span at residues 172–192 (VLFATMAVQTGFSFLQIFSIS). The Extracellular portion of the chain corresponds to 193 to 197 (WEMFT). A helical membrane pass occupies residues 198–218 (VLFLIVGMGQISNYVVAFILG). Residue 218–225 (GTEILGKS) coordinates ATP. The Cytoplasmic segment spans residues 219–232 (TEILGKSVRIIFST). The chain crosses the membrane as a helical span at residues 233–253 (LGVCTFFAVGYMLLPLFAYFI). Residues 254–257 (RDWR) are Extracellular-facing. A helical membrane pass occupies residues 258-278 (MLLLALTVPGVLCVPLWWFIP). Residues 279-337 (ESPRWLISQRRFREAEDIIQKAAKMNNIAVPAVIFDSVEELNPLKQQKAFILDLFRTWN) are Cytoplasmic-facing. Residues 338 to 358 (IAIMTIMSLLLWMLTSVGYFA) traverse the membrane as a helical segment. Over 359–371 (LSLDTPNLHGDAY) the chain is Extracellular. Residues 372-392 (LNCFLSALIEIPAYITAWLLL) traverse the membrane as a helical segment. Over 393-399 (RTLPRRY) the chain is Cytoplasmic. A helical transmembrane segment spans residues 400–420 (IIAAVLFWGGGVLLFIQLVPV). The Extracellular segment spans residues 421–426 (DYYFLS). The helical transmembrane segment at 427–447 (IGLVMLGKFGITSAFSMLYVF) threads the bilayer. At 448-460 (TAELYPTMVRNMA) the chain is on the cytoplasmic side. The chain crosses the membrane as a helical span at residues 461–481 (VGVTSMASRVGSIIAPYFVYL). Topologically, residues 482-486 (GAYNR) are extracellular. A helical transmembrane segment spans residues 487 to 507 (MLPYIVMGSLTVLIGILTLFF). At 508-551 (PESLGMTLPETLEQMQKVKWFRSGKKTRDSMETEENPKVLITAF) the chain is on the cytoplasmic side.

Belongs to the major facilitator (TC 2.A.1) superfamily. Organic cation transporter (TC 2.A.1.19) family. As to quaternary structure, interacts with PDZK1.

Its subcellular location is the apical cell membrane. The protein resides in the basal cell membrane. The protein localises to the mitochondrion membrane. It catalyses the reaction ergothioneine(out) + Na(+)(out) = ergothioneine(in) + Na(+)(in). It carries out the reaction acetylcholine(in) = acetylcholine(out). The catalysed reaction is (R)-carnitine(out) + Na(+)(out) = (R)-carnitine(in) + Na(+)(in). The enzyme catalyses glycine betaine(out) + Na(+)(out) = glycine betaine(in) + Na(+)(in). With respect to regulation, allosterically activated by intracellular ATP. In terms of biological role, transporter that mediates the transport of endogenous and microbial zwitterions and organic cations. Functions as a Na(+)-dependent and pH-dependent high affinity microbial symporter of potent food-derived antioxidant ergothioeine. Transports one sodium ion with one ergothioeine molecule. Involved in the absorption of ergothioneine from the luminal/apical side of the small intestine and renal tubular cells, and into non-parenchymal liver cells, thereby contributing to maintain steady-state ergothioneine level in the body. Also mediates the bidirectional transport of acetycholine, although the exact transport mechanism has not been fully identified yet. Most likely exports anti-inflammatory acetylcholine in non-neuronal tissues, thereby contributing to the non-neuronal cholinergic system. Displays a general physiological role linked to better survival by controlling inflammation and oxidative stress, which may be related to ergothioneine and acetycholine transports. May also function as a low-affinity Na(+)-dependent transporter of L-carnitine through the mitochondrial membrane, thereby maintaining intracellular carnitine homeostasis. May contribute to regulate the transport of cationic compounds in testis across the blood-testis-barrier. The polypeptide is Solute carrier family 22 member 4 (SLC22A4) (Papio anubis (Olive baboon)).